Reading from the N-terminus, the 72-residue chain is GSTLLEQMSLHGVRHAPGSLEANDFFLANDQRHGALGSFVRADEHDLSTLGDHPLRSHGGLSEQQLPLLLSR.

In terms of assembly, monomer. It depends on Unlike bacterial phosphonoacetate hydrolase, does not require zinc as a cofactor. as a cofactor.

It catalyses the reaction phosphonoacetate + H2O = acetate + phosphate + H(+). Unaffected by EDTA or Ca(2+), Co(2+), Cu(2+), Mg(2+), Mn(2+), Ni(2+) and Zn(2+). In Penicillium oxalicum, this protein is Phosphonoacetate hydrolase.